The chain runs to 208 residues: Endoplasmic reticulum vesicle protein 25 (208 aa).

The first 15 residues, 1 to 15 (MKFLLLLLLAPFISA), serve as a signal peptide directing secretion. Over 16-177 (LRFDLKAESK…TNESTNERVR (162 aa)) the chain is Lumenal. The GOLD domain occupies 28 to 118 (QMCIRDFVSE…KRAIELDIES (91 aa)). The chain crosses the membrane as a helical span at residues 178 to 198 (NFSVLVIIVLTSLGAWQVNYL). Residues 199–208 (KNYFKSKHII) lie on the Cytoplasmic side of the membrane.

This sequence belongs to the EMP24/GP25L family.

The protein localises to the endoplasmic reticulum membrane. Its subcellular location is the golgi apparatus membrane. Functionally, constituent of COPII-coated endoplasmic reticulum-derived transport vesicles. Required for efficient transport of a subset of secretory proteins to the Golgi. Facilitates retrograde transport from the Golgi to the endoplasmic reticulum. The protein is Endoplasmic reticulum vesicle protein 25 (ERV25) of Candida glabrata (strain ATCC 2001 / BCRC 20586 / JCM 3761 / NBRC 0622 / NRRL Y-65 / CBS 138) (Yeast).